Reading from the N-terminus, the 644-residue chain is Acetyl-coenzyme A synthetase (644 aa).

Residues 190–193 (RGSK) and threonine 308 each bind CoA. Residues 384 to 386 (GEP), 408 to 413 (DTWWQT), aspartate 497, and arginine 512 contribute to the ATP site. Serine 520 contributes to the CoA binding site. Arginine 523 contacts ATP. Mg(2+) contacts are provided by valine 534, histidine 536, and valine 539. Arginine 581 contacts CoA. Position 606 is an N6-acetyllysine (lysine 606).

The protein belongs to the ATP-dependent AMP-binding enzyme family. The cofactor is Mg(2+). In terms of processing, acetylated. Deacetylation by the SIR2-homolog deacetylase activates the enzyme.

The catalysed reaction is acetate + ATP + CoA = acetyl-CoA + AMP + diphosphate. Catalyzes the conversion of acetate into acetyl-CoA (AcCoA), an essential intermediate at the junction of anabolic and catabolic pathways. AcsA undergoes a two-step reaction. In the first half reaction, AcsA combines acetate with ATP to form acetyl-adenylate (AcAMP) intermediate. In the second half reaction, it can then transfer the acetyl group from AcAMP to the sulfhydryl group of CoA, forming the product AcCoA. The chain is Acetyl-coenzyme A synthetase from Magnetococcus marinus (strain ATCC BAA-1437 / JCM 17883 / MC-1).